The sequence spans 543 residues: MRRFVIGQAKNLIDQSRRRQLHHHKNLSFVSLIPPFSAPSDSSSRHLSSSSSSDMSASDSSSSLPVTLDTINPKVIKCEYAVRGEIVNIAQKLQEDLKTNKDAYPFDEIIYCNIGNPQSLGQQPITFFREVLALCSYTALLDESATHGLFSSDSIERAWKILDQIPGRATGAYSHSQGIKGLRDAIADGIEARDGFPADPNDIFMTDGASPGVHMMMQLLITSEKDGILCPIPQYPLYSASIALHGGTLVPYYLDEASGWGLEISELKKQLEDARSKGITVRALAVINPGNPTGQVLSEENQRDVVKFCKQEGLVLLADEVYQENVYVPDKKFHSFKKVARSMGYGEKDLALVSFQSVSKGYYGECGKRGGYMEVTGFTSDVREQIYKMASVNLCSNISGQILASLIMSPPKPGDDSYESYIAEKDGILSSLARRAKTLEEALNKLEGVTCNRAEGAMYLFPCLHLPQKAIAAAEAEKTAPDNFYCKRLLKATGIVVVPGSGFRQVPGTWHFRCTILPQEDKIPAIVDRLTAFHQSFMDEFRD.

The transit peptide at 1–55 directs the protein to the mitochondrion; the sequence is MRRFVIGQAKNLIDQSRRRQLHHHKNLSFVSLIPPFSAPSDSSSRHLSSSSSSDM. Over residues 43–63 the composition is skewed to low complexity; the sequence is SSRHLSSSSSSDMSASDSSSS. Positions 43 to 64 are disordered; sequence SSRHLSSSSSSDMSASDSSSSL. At S56 the chain carries N-acetylserine. Residues Y173, 209-210, Y235, N291, Y322, and 354-356 each bind pyridoxal 5'-phosphate; these read AS and SFQ. K360 is subject to N6-(pyridoxal phosphate)lysine. R369 and N397 together coordinate pyridoxal 5'-phosphate.

It belongs to the class-I pyridoxal-phosphate-dependent aminotransferase family. Alanine aminotransferase subfamily. Homodimer. Requires pyridoxal 5'-phosphate as cofactor. In terms of processing, the N-terminus is blocked. In terms of tissue distribution, mostly expressed in roots and shoots, mostly in vascular tissues, and, to a lower extent, in flowers and leaves.

The protein localises to the mitochondrion. It carries out the reaction L-alanine + 2-oxoglutarate = pyruvate + L-glutamate. Its pathway is photosynthesis; C4 acid pathway. The protein operates within amino-acid degradation; L-alanine degradation via transaminase pathway; pyruvate from L-alanine: step 1/1. Is the major alanine aminotransferase in roots that catalyzes the conversion of alanine to pyruvate. Involved in the rapid conversion of alanine to pyruvate during recovery from low-oxygen stress. This is Alanine aminotransferase 1, mitochondrial from Arabidopsis thaliana (Mouse-ear cress).